The primary structure comprises 814 residues: G-type lectin S-receptor-like serine/threonine-protein kinase At1g61370 (814 aa).

An N-terminal signal peptide occupies residues 1-25; sequence MGKIGIVFFASLLFLLIIFPSCAFA. Residues 26 to 145 enclose the Bulb-type lectin domain; the sequence is AITRASPLSI…VSERNLWESF (120 aa). Over 26–433 the chain is Extracellular; that stretch reads AITRASPLSI…SELAGSNRVK (408 aa). 6 N-linked (GlcNAc...) asparagine glycosylation sites follow: N43, N54, N89, N95, N253, and N271. Residues 282–318 form the EGF-like domain; it reads PVSSCDVYNTCGPFGLCIRSNPPKCECLKGFVPKSDE. 2 disulfides stabilise this stretch: C286–C298 and C292–C306. N324, N334, N340, and N383 each carry an N-linked (GlcNAc...) asparagine glycan. One can recognise a PAN domain in the interval 337-423; sequence CDVNSSATAQ…GETLSIRLAS (87 aa). 2 cysteine pairs are disulfide-bonded: C376-C397 and C380-C386. The chain crosses the membrane as a helical span at residues 434-454; that stretch reads IIVASIVSISVFMILVFASYW. Residues 455-814 are Cytoplasmic-facing; it reads YWRYKAKQND…NITQTAIVGR (360 aa). In terms of domain architecture, Protein kinase spans 501–786; it reads FSMENKLGQG…DLPKPKQPVF (286 aa). ATP-binding positions include 507–515 and K529; that span reads LGQGGFGPV. S535 and S550 each carry phosphoserine. Positions 590–607 are caM-binding; sequence TKKLELDWPKRFEIIQGI. D626 functions as the Proton acceptor in the catalytic mechanism. 2 positions are modified to phosphoserine: S630 and S643. T660 carries the post-translational modification Phosphothreonine. Residues S703, S704, S797, and S802 each carry the phosphoserine modification. Phosphothreonine is present on T809.

This sequence belongs to the protein kinase superfamily. Ser/Thr protein kinase family.

It localises to the cell membrane. The enzyme catalyses L-seryl-[protein] + ATP = O-phospho-L-seryl-[protein] + ADP + H(+). It catalyses the reaction L-threonyl-[protein] + ATP = O-phospho-L-threonyl-[protein] + ADP + H(+). This is G-type lectin S-receptor-like serine/threonine-protein kinase At1g61370 from Arabidopsis thaliana (Mouse-ear cress).